Reading from the N-terminus, the 270-residue chain is Formamidopyrimidine-DNA glycosylase (270 aa).

Proline 2 functions as the Schiff-base intermediate with DNA in the catalytic mechanism. The Proton donor role is filled by glutamate 3. Lysine 57 functions as the Proton donor; for beta-elimination activity in the catalytic mechanism. Residues histidine 90, arginine 109, and lysine 151 each coordinate DNA. Residues 236-270 form an FPG-type zinc finger; sequence RVYGRKGQACEVCESEIQSVTLGQRNTFFCEQCQK. The active-site Proton donor; for delta-elimination activity is arginine 260.

The protein belongs to the FPG family. Monomer. It depends on Zn(2+) as a cofactor.

It catalyses the reaction Hydrolysis of DNA containing ring-opened 7-methylguanine residues, releasing 2,6-diamino-4-hydroxy-5-(N-methyl)formamidopyrimidine.. The catalysed reaction is 2'-deoxyribonucleotide-(2'-deoxyribose 5'-phosphate)-2'-deoxyribonucleotide-DNA = a 3'-end 2'-deoxyribonucleotide-(2,3-dehydro-2,3-deoxyribose 5'-phosphate)-DNA + a 5'-end 5'-phospho-2'-deoxyribonucleoside-DNA + H(+). Involved in base excision repair of DNA damaged by oxidation or by mutagenic agents. Acts as a DNA glycosylase that recognizes and removes damaged bases. Has a preference for oxidized purines, such as 7,8-dihydro-8-oxoguanine (8-oxoG). Has AP (apurinic/apyrimidinic) lyase activity and introduces nicks in the DNA strand. Cleaves the DNA backbone by beta-delta elimination to generate a single-strand break at the site of the removed base with both 3'- and 5'-phosphates. The sequence is that of Formamidopyrimidine-DNA glycosylase from Pseudoalteromonas atlantica (strain T6c / ATCC BAA-1087).